Reading from the N-terminus, the 222-residue chain is Ribonuclease T (222 aa).

In terms of domain architecture, Exonuclease spans 20 to 194; the sequence is VVIDVETAGF…YDTERTAELF (175 aa). Residues aspartate 23, glutamate 25, histidine 181, and aspartate 186 each contribute to the Mg(2+) site. Histidine 181 functions as the Proton donor/acceptor in the catalytic mechanism.

Belongs to the RNase T family. In terms of assembly, homodimer. Mg(2+) serves as cofactor.

In terms of biological role, trims short 3' overhangs of a variety of RNA species, leaving a one or two nucleotide 3' overhang. Responsible for the end-turnover of tRNA: specifically removes the terminal AMP residue from uncharged tRNA (tRNA-C-C-A). Also appears to be involved in tRNA biosynthesis. This chain is Ribonuclease T, found in Shewanella sp. (strain MR-4).